We begin with the raw amino-acid sequence, 206 residues long: Small ribosomal subunit protein uS4 (206 aa).

The 61-residue stretch at 96–156 (TRLDNVVYRM…EKSRTQARIK (61 aa)) folds into the S4 RNA-binding domain.

It belongs to the universal ribosomal protein uS4 family. In terms of assembly, part of the 30S ribosomal subunit. Contacts protein S5. The interaction surface between S4 and S5 is involved in control of translational fidelity.

Its function is as follows. One of the primary rRNA binding proteins, it binds directly to 16S rRNA where it nucleates assembly of the body of the 30S subunit. With S5 and S12 plays an important role in translational accuracy. This is Small ribosomal subunit protein uS4 from Shewanella putrefaciens (strain CN-32 / ATCC BAA-453).